A 941-amino-acid chain; its full sequence is Isoleucine--tRNA ligase (941 aa).

Positions 69-79 match the 'HIGH' region motif; the sequence is PYANGDIHIGH. L-isoleucyl-5'-AMP is bound at residue E589. The 'KMSKS' region motif lies at 630–634; sequence KMSKS. K633 provides a ligand contact to ATP. 4 residues coordinate Zn(2+): C915, C918, C932, and C935.

Belongs to the class-I aminoacyl-tRNA synthetase family. IleS type 1 subfamily. As to quaternary structure, monomer. The cofactor is Zn(2+).

The protein localises to the cytoplasm. It catalyses the reaction tRNA(Ile) + L-isoleucine + ATP = L-isoleucyl-tRNA(Ile) + AMP + diphosphate. Functionally, catalyzes the attachment of isoleucine to tRNA(Ile). As IleRS can inadvertently accommodate and process structurally similar amino acids such as valine, to avoid such errors it has two additional distinct tRNA(Ile)-dependent editing activities. One activity is designated as 'pretransfer' editing and involves the hydrolysis of activated Val-AMP. The other activity is designated 'posttransfer' editing and involves deacylation of mischarged Val-tRNA(Ile). The protein is Isoleucine--tRNA ligase of Zymomonas mobilis subsp. mobilis (strain ATCC 31821 / ZM4 / CP4).